Here is a 156-residue protein sequence, read N- to C-terminus: Small ribosomal subunit protein uS7 (156 aa).

The protein belongs to the universal ribosomal protein uS7 family. As to quaternary structure, part of the 30S ribosomal subunit. Contacts proteins S9 and S11.

One of the primary rRNA binding proteins, it binds directly to 16S rRNA where it nucleates assembly of the head domain of the 30S subunit. Is located at the subunit interface close to the decoding center, probably blocks exit of the E-site tRNA. This Synechococcus sp. (strain CC9902) protein is Small ribosomal subunit protein uS7.